The primary structure comprises 340 residues: Uroporphyrinogen decarboxylase (340 aa).

Substrate is bound by residues 21–25 (RQAGR), Phe40, Asp71, Tyr148, Ser203, and His316.

The protein belongs to the uroporphyrinogen decarboxylase family. In terms of assembly, homodimer.

It is found in the cytoplasm. It carries out the reaction uroporphyrinogen III + 4 H(+) = coproporphyrinogen III + 4 CO2. Its pathway is porphyrin-containing compound metabolism; protoporphyrin-IX biosynthesis; coproporphyrinogen-III from 5-aminolevulinate: step 4/4. Its function is as follows. Catalyzes the decarboxylation of four acetate groups of uroporphyrinogen-III to yield coproporphyrinogen-III. The chain is Uroporphyrinogen decarboxylase from Campylobacter jejuni subsp. jejuni serotype O:2 (strain ATCC 700819 / NCTC 11168).